The sequence spans 147 residues: UPF0178 protein Patl_1318 (147 aa).

The protein belongs to the UPF0178 family.

The polypeptide is UPF0178 protein Patl_1318 (Pseudoalteromonas atlantica (strain T6c / ATCC BAA-1087)).